The chain runs to 247 residues: Probable transcriptional regulatory protein SynWH7803_1972 (247 aa).

This sequence belongs to the TACO1 family.

It is found in the cytoplasm. The protein is Probable transcriptional regulatory protein SynWH7803_1972 of Synechococcus sp. (strain WH7803).